A 245-amino-acid chain; its full sequence is 1-(5-phosphoribosyl)-5-[(5-phosphoribosylamino)methylideneamino] imidazole-4-carboxamide isomerase (245 aa).

The active-site Proton acceptor is the Asp-8. Asp-129 serves as the catalytic Proton donor.

This sequence belongs to the HisA/HisF family.

It localises to the cytoplasm. The catalysed reaction is 1-(5-phospho-beta-D-ribosyl)-5-[(5-phospho-beta-D-ribosylamino)methylideneamino]imidazole-4-carboxamide = 5-[(5-phospho-1-deoxy-D-ribulos-1-ylimino)methylamino]-1-(5-phospho-beta-D-ribosyl)imidazole-4-carboxamide. The protein operates within amino-acid biosynthesis; L-histidine biosynthesis; L-histidine from 5-phospho-alpha-D-ribose 1-diphosphate: step 4/9. The chain is 1-(5-phosphoribosyl)-5-[(5-phosphoribosylamino)methylideneamino] imidazole-4-carboxamide isomerase from Geotalea uraniireducens (strain Rf4) (Geobacter uraniireducens).